Reading from the N-terminus, the 924-residue chain is Protein translocase subunit SecA (924 aa).

ATP-binding positions include Q87, 105–109 (GEGKT), and D515. Positions 908, 910, 919, and 920 each coordinate Zn(2+).

The protein belongs to the SecA family. As to quaternary structure, monomer and homodimer. Part of the essential Sec protein translocation apparatus which comprises SecA, SecYEG and auxiliary proteins SecDF-YajC and YidC. The cofactor is Zn(2+).

It is found in the cell inner membrane. The protein resides in the cytoplasm. It catalyses the reaction ATP + H2O + cellular proteinSide 1 = ADP + phosphate + cellular proteinSide 2.. Its function is as follows. Part of the Sec protein translocase complex. Interacts with the SecYEG preprotein conducting channel. Has a central role in coupling the hydrolysis of ATP to the transfer of proteins into and across the cell membrane, serving both as a receptor for the preprotein-SecB complex and as an ATP-driven molecular motor driving the stepwise translocation of polypeptide chains across the membrane. The protein is Protein translocase subunit SecA of Cupriavidus pinatubonensis (strain JMP 134 / LMG 1197) (Cupriavidus necator (strain JMP 134)).